We begin with the raw amino-acid sequence, 317 residues long: Ribosomal protein L11 methyltransferase (317 aa).

Positions 158, 179, 201, and 244 each coordinate S-adenosyl-L-methionine.

Belongs to the methyltransferase superfamily. PrmA family.

The protein localises to the cytoplasm. The enzyme catalyses L-lysyl-[protein] + 3 S-adenosyl-L-methionine = N(6),N(6),N(6)-trimethyl-L-lysyl-[protein] + 3 S-adenosyl-L-homocysteine + 3 H(+). Functionally, methylates ribosomal protein L11. This chain is Ribosomal protein L11 methyltransferase, found in Streptococcus pyogenes serotype M28 (strain MGAS6180).